A 535-amino-acid chain; its full sequence is Peptide chain release factor 3 (535 aa).

Residues 8–278 (ARRRTFAIIS…VDQAPAPGPR (271 aa)) form the tr-type G domain. GTP-binding positions include 17–24 (SHPDAGKT), 85–89 (DTPGH), and 139–142 (NKLD).

It belongs to the TRAFAC class translation factor GTPase superfamily. Classic translation factor GTPase family. PrfC subfamily.

It is found in the cytoplasm. Increases the formation of ribosomal termination complexes and stimulates activities of RF-1 and RF-2. It binds guanine nucleotides and has strong preference for UGA stop codons. It may interact directly with the ribosome. The stimulation of RF-1 and RF-2 is significantly reduced by GTP and GDP, but not by GMP. The chain is Peptide chain release factor 3 from Bordetella parapertussis (strain 12822 / ATCC BAA-587 / NCTC 13253).